The sequence spans 256 residues: MKLYKADAIVLRARDCGEGDKILTLYSREHGRIKAMAHGVSKPTSRKRGAVQPFTRSRFLLRRGRELDTVSQCEGVETFPFLRESLERIGYASYVAELVEALTPEGEPNESLFFLLLDVLRLLAGGDAEMLARAFELKVAALLGYCPVLERCSHCQGALAGPLFFSSSLGGAVCGLCVAFAANPVEVNKGTLEILKALLNWPLARIGLLRVNRRFRNRIRLILRQYLTYHLERDLKSYAFLDRFGQAPAGSGAADV.

It belongs to the RecO family.

In terms of biological role, involved in DNA repair and RecF pathway recombination. In Pelotomaculum thermopropionicum (strain DSM 13744 / JCM 10971 / SI), this protein is DNA repair protein RecO.